The following is a 474-amino-acid chain: Probable glycine dehydrogenase (decarboxylating) subunit 2 (474 aa).

Lysine 262 bears the N6-(pyridoxal phosphate)lysine mark.

This sequence belongs to the GcvP family. C-terminal subunit subfamily. As to quaternary structure, the glycine cleavage system is composed of four proteins: P, T, L and H. In this organism, the P 'protein' is a heterodimer of two subunits. Pyridoxal 5'-phosphate serves as cofactor.

It carries out the reaction N(6)-[(R)-lipoyl]-L-lysyl-[glycine-cleavage complex H protein] + glycine + H(+) = N(6)-[(R)-S(8)-aminomethyldihydrolipoyl]-L-lysyl-[glycine-cleavage complex H protein] + CO2. The glycine cleavage system catalyzes the degradation of glycine. The P protein binds the alpha-amino group of glycine through its pyridoxal phosphate cofactor; CO(2) is released and the remaining methylamine moiety is then transferred to the lipoamide cofactor of the H protein. The chain is Probable glycine dehydrogenase (decarboxylating) subunit 2 from Thermotoga petrophila (strain ATCC BAA-488 / DSM 13995 / JCM 10881 / RKU-1).